A 127-amino-acid polypeptide reads, in one-letter code: MATVSRKKKKVKVTPEGAVHIKASFNNIMVTITDVQGNTVSWSSAGKNGFKGSKKNTPYASQVTSEAAAKEAFDLGMRHVHVFIKGPGAGRDAAIRALQGAGLEVRTIKDITPLPHNGCRPPKRRRV.

The protein belongs to the universal ribosomal protein uS11 family. In terms of assembly, part of the 30S ribosomal subunit. Interacts with proteins S7 and S18. Binds to IF-3.

Its function is as follows. Located on the platform of the 30S subunit, it bridges several disparate RNA helices of the 16S rRNA. Forms part of the Shine-Dalgarno cleft in the 70S ribosome. This Chlorobium chlorochromatii (strain CaD3) protein is Small ribosomal subunit protein uS11.